Reading from the N-terminus, the 316-residue chain is N-acetylmuramic acid 6-phosphate etherase (316 aa).

A disordered region spans residues 1 to 25 (MAVFDPDLQPSSDRGHLLTEQSNQR). Positions 66–229 (VANRLRAGGR…STAVMVKLGK (164 aa)) constitute an SIS domain. Glutamate 94 serves as the catalytic Proton donor. Residue glutamate 125 is part of the active site.

This sequence belongs to the GCKR-like family. MurNAc-6-P etherase subfamily. As to quaternary structure, homodimer.

It catalyses the reaction N-acetyl-D-muramate 6-phosphate + H2O = N-acetyl-D-glucosamine 6-phosphate + (R)-lactate. Its pathway is amino-sugar metabolism; N-acetylmuramate degradation. Specifically catalyzes the cleavage of the D-lactyl ether substituent of MurNAc 6-phosphate, producing GlcNAc 6-phosphate and D-lactate. The chain is N-acetylmuramic acid 6-phosphate etherase from Synechococcus sp. (strain CC9605).